Reading from the N-terminus, the 925-residue chain is Neuropilin-2 (925 aa).

A signal peptide spans 1-22 (MDMFPLTWIFLALYFSGHKVRS). Over 23–858 (QQDPPCGGRL…EKSWLYTLDP (836 aa)) the chain is Extracellular. Cystine bridges form between cysteine 28/cysteine 55, cysteine 83/cysteine 105, and cysteine 149/cysteine 175. CUB domains follow at residues 28-142 (CGGR…YEIF) and 149-267 (CSKN…YYLV). N-linked (GlcNAc...) asparagine glycans are attached at residues asparagine 152 and asparagine 157. 3 residues coordinate Ca(2+): glutamate 197, aspartate 211, and aspartate 252. Cysteine 208 and cysteine 230 are joined by a disulfide. Intrachain disulfides connect cysteine 277/cysteine 427 and cysteine 434/cysteine 592. F5/8 type C domains lie at 277–427 (CNAP…LFGC) and 434–592 (CSNM…VLGC). A compositionally biased stretch (polar residues) spans 297-310 (STFSDGRWTPQQSR). Residues 297–317 (STFSDGRWTPQQSRLHGDDNG) are disordered. The interval 601–621 (VETLGPTVKSEETTTPYPMDE) is disordered. Residue asparagine 629 is glycosylated (N-linked (GlcNAc...) asparagine). The MAM domain maps to 642-802 (SGFNCNFDFP…TDVPLENCME (161 aa)). Residues 820 to 830 (YEDEIDDDYEG) show a composition bias toward acidic residues. The tract at residues 820-849 (YEDEIDDDYEGDWNNSSSTSGAGSPSSGKE) is disordered. Asparagine 833 and asparagine 834 each carry an N-linked (GlcNAc...) asparagine glycan. Over residues 835–846 (SSSTSGAGSPSS) the composition is skewed to low complexity. A helical transmembrane segment spans residues 859–883 (ILITIIAMSSLGVLLGATCAGLLLY). At 884 to 925 (CTCSYSGLSSRSCTTLENYNFELYDGLKHKVKINHQKCCSEA) the chain is on the cytoplasmic side.

Belongs to the neuropilin family. As to quaternary structure, heterodimer with NRP1. Binds PLXNB1. As to expression, found in certain neuronal populations of the CNS, including dorsal root ganglia, and in other non-neuronal tissues including mesenchymal tissue lining in the ribs.

It localises to the membrane. High affinity receptor for semaphorins 3C, 3F, VEGF-165 and VEGF-145 isoforms of VEGF, and the PLGF-2 isoform of PGF. This chain is Neuropilin-2 (Nrp2), found in Rattus norvegicus (Rat).